The following is a 443-amino-acid chain: Protein Z-dependent protease inhibitor (443 aa).

Positions 1–23 (MKVVPSLLLSVLLAQVWLVPGLA) are cleaved as a signal peptide. Residues 24–66 (PSPQSPETPAPQNQTSRVVQAPREEEEDEQEASEEKAGDEEKA) form a disordered region. N36 carries N-linked (GlcNAc...) asparagine glycosylation. The residue at position 56 (S56) is a Phosphoserine. Residues 56 to 66 (SEEKAGDEEKA) show a composition bias toward basic and acidic residues. The segment at 136–153 (TKPGLLPSLFKGLRETLS) is heparin-binding. N-linked (GlcNAc...) asparagine glycosylation is found at N180 and N295.

It belongs to the serpin family. In terms of processing, phosphorylated by FAM20C in the extracellular medium.

The protein resides in the secreted. In terms of biological role, inhibits activity of the coagulation protease factor Xa in the presence of PROZ, calcium and phospholipids. Also inhibits factor XIa in the absence of cofactors. This Pongo abelii (Sumatran orangutan) protein is Protein Z-dependent protease inhibitor (SERPINA10).